We begin with the raw amino-acid sequence, 233 residues long: Superoxide dismutase [Mn] 3.3, mitochondrial (233 aa).

The transit peptide at 1 to 29 (MALRTLASKNALSFALGGAARPSAESARG) directs the protein to the mitochondrion. Mn(2+) is bound by residues His-57, His-105, Asp-194, and His-198.

This sequence belongs to the iron/manganese superoxide dismutase family. In terms of assembly, homotetramer. Mn(2+) is required as a cofactor. In terms of tissue distribution, predominantly expressed in the embryo late in embryogenesis.

It is found in the mitochondrion matrix. The enzyme catalyses 2 superoxide + 2 H(+) = H2O2 + O2. Destroys superoxide anion radicals which are normally produced within the cells and which are toxic to biological systems. The sequence is that of Superoxide dismutase [Mn] 3.3, mitochondrial (SODA.2) from Zea mays (Maize).